Consider the following 227-residue polypeptide: DnaJ homolog subfamily B member 8 (227 aa).

Residues asparagine 3–glycine 69 form the J domain.

As to quaternary structure, interacts with histone deacetylases HDAC4, HDAC6, and SIRT2, HDAC activity is required for antiaggregation.

In terms of biological role, efficient suppressor of aggregation and toxicity of disease-associated polyglutamine proteins. The chain is DnaJ homolog subfamily B member 8 (Dnajb8) from Mus musculus (Mouse).